A 189-amino-acid polypeptide reads, in one-letter code: Small ribosomal subunit protein uS5 (189 aa).

In terms of domain architecture, S5 DRBM spans 22–85; that stretch reads FVDKLVAINR…EAAKRDLIFV (64 aa).

The protein belongs to the universal ribosomal protein uS5 family. As to quaternary structure, part of the 30S ribosomal subunit. Contacts proteins S4 and S8.

In terms of biological role, with S4 and S12 plays an important role in translational accuracy. Functionally, located at the back of the 30S subunit body where it stabilizes the conformation of the head with respect to the body. The chain is Small ribosomal subunit protein uS5 from Sinorhizobium medicae (strain WSM419) (Ensifer medicae).